A 122-amino-acid chain; its full sequence is NADH-quinone oxidoreductase subunit A (122 aa).

The next 3 membrane-spanning stretches (helical) occupy residues M10–G30, I66–V86, and L91–A111.

It belongs to the complex I subunit 3 family. As to quaternary structure, NDH-1 is composed of 14 different subunits. Subunits NuoA, H, J, K, L, M, N constitute the membrane sector of the complex.

Its subcellular location is the cell membrane. It catalyses the reaction a quinone + NADH + 5 H(+)(in) = a quinol + NAD(+) + 4 H(+)(out). In terms of biological role, NDH-1 shuttles electrons from NADH, via FMN and iron-sulfur (Fe-S) centers, to quinones in the respiratory chain. The immediate electron acceptor for the enzyme in this species is believed to be a menaquinone. Couples the redox reaction to proton translocation (for every two electrons transferred, four hydrogen ions are translocated across the cytoplasmic membrane), and thus conserves the redox energy in a proton gradient. This is NADH-quinone oxidoreductase subunit A from Bacillus cytotoxicus (strain DSM 22905 / CIP 110041 / 391-98 / NVH 391-98).